The following is a 42-amino-acid chain: GTPCYCGKTIGIYWFGTKTCPSNRGYTGSCGYFLGICCYPVD.

3 cysteine pairs are disulfide-bonded: Cys4–Cys37, Cys6–Cys30, and Cys20–Cys38.

The protein belongs to the sea anemone type 3 (BDS) potassium channel toxin family.

It localises to the secreted. Its subcellular location is the nematocyst. Functionally, binds to voltage-gated sodium channels (Nav), and slows down the inactivation of mammalian Nav1.2/SCN2A, Nav1.3/SCN3A Nav1.4/SCN4A, Nav1.6/SCN8A, insect DmNav1 and BgNav1 channels, and arachnid VdNav1 channel. This toxin acts by binding to site 3 of sodium channels. This Anthopleura elegantissima (Green aggregating anemone) protein is Delta-actitoxin-Ael2d.